A 288-amino-acid polypeptide reads, in one-letter code: Peptidyl-tRNA hydrolase, chloroplastic (288 aa).

Residues 1–55 (MKAVAFPAKIANLSFPSNCCSLFFRSPATFLSPALPCRKLTKGIRGLEGLMSQCL) constitute a chloroplast transit peptide. Tyr107 provides a ligand contact to tRNA. The Proton acceptor role is filled by His112. TRNA is bound by residues Phe157, Asn159, and Asn205.

The protein belongs to the PTH family. In terms of assembly, monomer.

The protein resides in the plastid. The protein localises to the chloroplast stroma. It catalyses the reaction an N-acyl-L-alpha-aminoacyl-tRNA + H2O = an N-acyl-L-amino acid + a tRNA + H(+). Functionally, the natural substrate for this enzyme may be peptidyl-tRNAs which drop off the ribosome during protein synthesis. In Arabidopsis thaliana (Mouse-ear cress), this protein is Peptidyl-tRNA hydrolase, chloroplastic.